Here is a 53-residue protein sequence, read N- to C-terminus: Small, acid-soluble spore protein K (53 aa).

The segment at M1–E53 is disordered.

It belongs to the SspK family.

It is found in the spore core. The sequence is that of Small, acid-soluble spore protein K from Bacillus cytotoxicus (strain DSM 22905 / CIP 110041 / 391-98 / NVH 391-98).